The primary structure comprises 757 residues: Probable inorganic carbon transporter subunit DabA (757 aa).

Positions 321, 323, 475, and 490 each coordinate Zn(2+).

Belongs to the inorganic carbon transporter (TC 9.A.2) DabA family. As to quaternary structure, forms a complex with DabB. It depends on Zn(2+) as a cofactor.

It localises to the cell inner membrane. Its function is as follows. Part of an energy-coupled inorganic carbon pump. The sequence is that of Probable inorganic carbon transporter subunit DabA from Idiomarina loihiensis (strain ATCC BAA-735 / DSM 15497 / L2-TR).